We begin with the raw amino-acid sequence, 123 residues long: Small ribosomal subunit protein uS12 (123 aa).

The disordered stretch occupies residues 1–23 (MPTISQLVKKGREKVEKKTKSPA). At D89 the chain carries 3-methylthioaspartic acid.

It belongs to the universal ribosomal protein uS12 family. Part of the 30S ribosomal subunit. Contacts proteins S8 and S17. May interact with IF1 in the 30S initiation complex.

Functionally, with S4 and S5 plays an important role in translational accuracy. Interacts with and stabilizes bases of the 16S rRNA that are involved in tRNA selection in the A site and with the mRNA backbone. Located at the interface of the 30S and 50S subunits, it traverses the body of the 30S subunit contacting proteins on the other side and probably holding the rRNA structure together. The combined cluster of proteins S8, S12 and S17 appears to hold together the shoulder and platform of the 30S subunit. This Thermodesulfovibrio yellowstonii (strain ATCC 51303 / DSM 11347 / YP87) protein is Small ribosomal subunit protein uS12.